Reading from the N-terminus, the 477-residue chain is Ribulose bisphosphate carboxylase large chain (477 aa).

Residues 1-2 constitute a propeptide that is removed on maturation; that stretch reads MS. The residue at position 3 (Pro-3) is an N-acetylproline. At Lys-14 the chain carries N6,N6,N6-trimethyllysine. Residues Asn-123 and Thr-173 each coordinate substrate. Residue Lys-175 is the Proton acceptor of the active site. Lys-177 provides a ligand contact to substrate. Mg(2+) contacts are provided by Lys-201, Asp-203, and Glu-204. An N6-carboxylysine modification is found at Lys-201. His-294 acts as the Proton acceptor in catalysis. The substrate site is built by Arg-295, His-327, and Ser-379.

Belongs to the RuBisCO large chain family. Type I subfamily. Heterohexadecamer of 8 large chains and 8 small chains; disulfide-linked. The disulfide link is formed within the large subunit homodimers. The cofactor is Mg(2+). Post-translationally, the disulfide bond which can form in the large chain dimeric partners within the hexadecamer appears to be associated with oxidative stress and protein turnover.

The protein resides in the plastid. It localises to the chloroplast. The catalysed reaction is 2 (2R)-3-phosphoglycerate + 2 H(+) = D-ribulose 1,5-bisphosphate + CO2 + H2O. It catalyses the reaction D-ribulose 1,5-bisphosphate + O2 = 2-phosphoglycolate + (2R)-3-phosphoglycerate + 2 H(+). Its function is as follows. RuBisCO catalyzes two reactions: the carboxylation of D-ribulose 1,5-bisphosphate, the primary event in carbon dioxide fixation, as well as the oxidative fragmentation of the pentose substrate in the photorespiration process. Both reactions occur simultaneously and in competition at the same active site. This is Ribulose bisphosphate carboxylase large chain from Carthamus tinctorius (Safflower).